The chain runs to 270 residues: uncharacterized protein (270 aa).

The active-site Proton donor is His171. Cys261 serves as the catalytic Nucleophile.

It belongs to the DDAH family.

This is an uncharacterized protein from Aeropyrum pernix (strain ATCC 700893 / DSM 11879 / JCM 9820 / NBRC 100138 / K1).